Here is a 424-residue protein sequence, read N- to C-terminus: Phosphomethylpyrimidine synthase (424 aa).

Substrate contacts are provided by residues Met94, Tyr123, His162, 184–186, 225–228, and Glu264; these read SRG and NGMR. His268 is a binding site for Zn(2+). A substrate-binding site is contributed by Tyr291. His332 is a binding site for Zn(2+). Positions 406, 409, and 413 each coordinate [4Fe-4S] cluster.

This sequence belongs to the ThiC family. It depends on [4Fe-4S] cluster as a cofactor.

It carries out the reaction 5-amino-1-(5-phospho-beta-D-ribosyl)imidazole + S-adenosyl-L-methionine = 4-amino-2-methyl-5-(phosphooxymethyl)pyrimidine + CO + 5'-deoxyadenosine + formate + L-methionine + 3 H(+). It participates in cofactor biosynthesis; thiamine diphosphate biosynthesis. Its function is as follows. Catalyzes the synthesis of the hydroxymethylpyrimidine phosphate (HMP-P) moiety of thiamine from aminoimidazole ribotide (AIR) in a radical S-adenosyl-L-methionine (SAM)-dependent reaction. In Methanosphaerula palustris (strain ATCC BAA-1556 / DSM 19958 / E1-9c), this protein is Phosphomethylpyrimidine synthase.